The chain runs to 260 residues: Glutathione S-transferase domain-containing protein DDB_G0274223 (260 aa).

The 90-residue stretch at 7-96 (KVDYIFYTNN…YLAQKYNTFL (90 aa)) folds into the GST N-terminal domain. One can recognise a GST C-terminal domain in the interval 102–233 (NPHENSDVIT…GFKTFNPSAL (132 aa)).

This sequence belongs to the GST superfamily.

The chain is Glutathione S-transferase domain-containing protein DDB_G0274223 from Dictyostelium discoideum (Social amoeba).